The primary structure comprises 87 residues: Small ribosomal subunit protein bS20 (87 aa).

The interval 1-22 is disordered; the sequence is MANTSQARKRARQAGVRRVRNA. Residues 7–20 show a composition bias toward basic residues; it reads ARKRARQAGVRRVR.

Belongs to the bacterial ribosomal protein bS20 family.

Binds directly to 16S ribosomal RNA. The protein is Small ribosomal subunit protein bS20 of Nitrosococcus oceani (strain ATCC 19707 / BCRC 17464 / JCM 30415 / NCIMB 11848 / C-107).